The sequence spans 327 residues: Interleukin-12 subunit beta (327 aa).

Positions 1 to 22 (MHPQQLVVSWFSLVLLASPIVA) are cleaved as a signal peptide. The Ig-like C2-type domain maps to 23 to 106 (MWELEKNVYV…LSRSLLLLHK (84 aa)). C50 and C90 are joined by a disulfide. N223 is a glycosylation site (N-linked (GlcNAc...) asparagine). The 90-residue stretch at 238–327 (PPKNLQLRPL…WSEWASVSCS (90 aa)) folds into the Fibronectin type-III domain.

Belongs to the IL-12B family. As to quaternary structure, heterodimer with IL12A; disulfide-linked. The heterodimer is known as interleukin IL-12. Heterodimer with IL23A; disulfide-linked. The heterodimer is known as interleukin IL-23. Also secreted as a monomer. Interacts with NBR1; this interaction promotes IL-12 secretion.

The protein resides in the secreted. Functionally, cytokine that can act as a growth factor for activated T and NK cells, enhance the lytic activity of NK/lymphokine-activated killer cells, and stimulate the production of IFN-gamma by resting PBMC. Its function is as follows. Associates with IL23A to form the IL-23 interleukin, a heterodimeric cytokine which functions in innate and adaptive immunity. IL-23 may constitute with IL-17 an acute response to infection in peripheral tissues. IL-23 binds to a heterodimeric receptor complex composed of IL12RB1 and IL23R, activates the Jak-Stat signaling cascade, stimulates memory rather than naive T-cells and promotes production of pro-inflammatory cytokines. IL-23 induces autoimmune inflammation and thus may be responsible for autoimmune inflammatory diseases and may be important for tumorigenesis. In Bos taurus (Bovine), this protein is Interleukin-12 subunit beta (IL12B).